The primary structure comprises 208 residues: LexA repressor (208 aa).

Residues 28–48 (RAEIARELGFRSANAAEEHLK) constitute a DNA-binding region (H-T-H motif). Catalysis depends on for autocatalytic cleavage activity residues Ser125 and Lys162.

It belongs to the peptidase S24 family. Homodimer.

It catalyses the reaction Hydrolysis of Ala-|-Gly bond in repressor LexA.. Represses a number of genes involved in the response to DNA damage (SOS response), including recA and lexA. In the presence of single-stranded DNA, RecA interacts with LexA causing an autocatalytic cleavage which disrupts the DNA-binding part of LexA, leading to derepression of the SOS regulon and eventually DNA repair. The sequence is that of LexA repressor from Aliivibrio fischeri (strain ATCC 700601 / ES114) (Vibrio fischeri).